Reading from the N-terminus, the 611-residue chain is Beta-hexosaminidase (611 aa).

This sequence belongs to the glycosyl hydrolase 20 family. In terms of assembly, homodimer.

It localises to the periplasm. The catalysed reaction is Hydrolysis of terminal non-reducing N-acetyl-D-hexosamine residues in N-acetyl-beta-D-hexosaminides.. It functions in the pathway glycan degradation; chitin degradation. Its activity is regulated as follows. Inhibited by mercuric ions, PNP-beta-Glc, PNP-beta-Gal, PNP-alpha-GlcNAc, and PNP-beta-S-GlcNAc. Its function is as follows. Hydrolyzes aryl-N-acetyl-beta-D-glucosaminide (aryl-beta-GlcNAc), aryl-beta-GalNAc and chitin oligosaccharides. Can hydrolyze rapidly the artificial substrates p-nitrophenyl-N-acetyl-beta-D-glucosaminide (PNP-beta-GlcNAc) and 4-methylumbelliferyl-beta-GlcNAc, and is slightly active on p-nitrophenyl-beta-GalNAc. This enzyme is not processive, i.e. when it hydrolyzes (GlcNAc)n, both products, (Glc-NAc)n-1 and the terminal GlcNAc, are released before the enzyme attacks a second molecule of (GlcNAc)n or (GlcNAc)n-1. This Vibrio furnissii protein is Beta-hexosaminidase.